Reading from the N-terminus, the 297-residue chain is Haloalkane dehalogenase (297 aa).

One can recognise an AB hydrolase-1 domain in the interval 47 to 148 (PPIVLLHGEP…AIARLVVANG (102 aa)). D123 functions as the Nucleophile in the catalytic mechanism. D250 functions as the Proton donor in the catalytic mechanism. H279 (proton acceptor) is an active-site residue.

It belongs to the haloalkane dehalogenase family. Type 1 subfamily. As to quaternary structure, monomer.

The catalysed reaction is 1-haloalkane + H2O = a halide anion + a primary alcohol + H(+). Its function is as follows. Catalyzes hydrolytic cleavage of carbon-halogen bonds in halogenated aliphatic compounds, leading to the formation of the corresponding primary alcohols, halide ions and protons. The protein is Haloalkane dehalogenase of Mycobacterium marinum (strain ATCC BAA-535 / M).